Consider the following 106-residue polypeptide: NADH-quinone oxidoreductase subunit K (106 aa).

The next 3 helical transmembrane spans lie at 10 to 30 (IHYY…GVMV), 35 to 55 (VLIF…FVTF), and 67 to 87 (VVFF…AIVI).

This sequence belongs to the complex I subunit 4L family. NDH-1 is composed of 14 different subunits. Subunits NuoA, H, J, K, L, M, N constitute the membrane sector of the complex.

Its subcellular location is the cell inner membrane. It carries out the reaction a quinone + NADH + 5 H(+)(in) = a quinol + NAD(+) + 4 H(+)(out). Functionally, NDH-1 shuttles electrons from NADH, via FMN and iron-sulfur (Fe-S) centers, to quinones in the respiratory chain. The immediate electron acceptor for the enzyme in this species is believed to be ubiquinone. Couples the redox reaction to proton translocation (for every two electrons transferred, four hydrogen ions are translocated across the cytoplasmic membrane), and thus conserves the redox energy in a proton gradient. The protein is NADH-quinone oxidoreductase subunit K of Leptospira borgpetersenii serovar Hardjo-bovis (strain JB197).